A 64-amino-acid chain; its full sequence is uncharacterized protein (64 aa).

The interval 35–64 is disordered; it reads TIRKPPIEHAAGPLGSTSRAGHRSYGGVAS.

This is an uncharacterized protein from Mycobacterium tuberculosis (strain ATCC 25618 / H37Rv).